A 207-amino-acid chain; its full sequence is MSSSLQSNRQSLNRKVAVMGYPHVGKSALVLRFTQNIFPERYESTIEDQHSKHIAAFHRDYHLRVTDTAGQQEYTVFPRSCSLDINGFILVYAIDDRKSFEMCSNIYEKIVRTYGDTSIPIVIVGNKTDLSTQRVVRAEEGEELARQWDAKFVEITARESNRVHEVFELLLREIEISRGNLSPTERPNGNSPKRNPFKDDGKPCSIS.

Positions 25, 26, 27, 42, 45, 126, 129, and 157 each coordinate GTP. A Mg(2+)-binding site is contributed by Ser-27. The Effector region motif lies at 42-50 (YESTIEDQH). Thr-45 serves as a coordination point for Mg(2+). Polar residues predominate over residues 180–193 (NLSPTERPNGNSPK). Residues 180–207 (NLSPTERPNGNSPKRNPFKDDGKPCSIS) are disordered. Positions 196–207 (PFKDDGKPCSIS) are enriched in basic and acidic residues. Cys-204 carries the post-translational modification Cysteine methyl ester. Residue Cys-204 is the site of S-farnesyl cysteine attachment. The propeptide at 205–207 (SIS) is removed in mature form.

Belongs to the small GTPase superfamily. Rheb family.

It is found in the cell membrane. It carries out the reaction GTP + H2O = GDP + phosphate + H(+). In terms of biological role, binds GTP and exhibits intrinsic GTPase activity. In Caenorhabditis elegans, this protein is GTP-binding protein Rheb homolog 1 (rheb-1).